Consider the following 3471-residue polypeptide: Genome polyprotein (3471 aa).

Positions 513 to 603 (EVQDALEKSM…RADIDALKKK (91 aa)) form a coiled coil. 2 disordered regions span residues 603 to 639 (KPAQ…EMSE) and 1271 to 1307 (NKTT…ARTS). 2 stretches are compositionally biased toward polar residues: residues 606-621 (QSVT…SGTA) and 1271-1291 (NKTT…TSTV). 2 consecutive transmembrane segments (helical) span residues 1493-1513 (DKWI…LHYY) and 1592-1612 (MSSL…GKIP). Residues 1748–1914 (LELMNESYTY…PDVPKNEANP (167 aa)) form the SF3 helicase domain. 1774 to 1781 (GAPGVGKS) is a binding site for ATP. The chain crosses the membrane as a helical span at residues 2360–2380 (ILLAIGASVAVAGVAVGAVIL). The segment covering 2391–2401 (EDEEIEGEEGE) has biased composition (acidic residues). Disordered stretches follow at residues 2391-2411 (EDEE…HESD) and 2435-2460 (VAEA…NFLG). Residues 2435–2448 (VAEAHEEKSTEKPR) show a composition bias toward basic and acidic residues. In terms of domain architecture, Peptidase C3 spans 2629–2847 (GVDRDLSMTN…YAETLTQEHL (219 aa)). Residues His-2677, Glu-2714, and Cys-2808 each act as for picornain 3C-like protease activity in the active site. The RdRp catalytic domain occupies 3152-3283 (TKGFAGDYSK…SVHEEFLDVY (132 aa)).

Post-translationally, specific enzymatic cleavages by picornain 3C-like protease in vivo yield mature proteins. Picornain 3C-like protease is autocatalytically processed.

The protein localises to the virion. It is found in the host membrane. The catalysed reaction is RNA(n) + a ribonucleoside 5'-triphosphate = RNA(n+1) + diphosphate. In terms of biological role, picornain 3C-like protease is a thiol protease that probably cleaves the polyprotein. The sequence is that of Genome polyprotein from Oryza sativa (Rice).